The sequence spans 941 residues: Coiled-coil and C2 domain-containing protein 1A (941 aa).

Phosphothreonine is present on Thr91. Disordered stretches follow at residues 183–248 and 301–336; these read TINE…PCSP and SRLPPPPDQLSPEPPLPAAQPVTPASTLTRPEVPQP. The segment covering 228-239 has biased composition (polar residues); that stretch reads APSTTAQTSAKP. The residue at position 247 (Ser247) is a Phosphoserine. Positions 303–318 are enriched in pro residues; it reads LPPPPDQLSPEPPLPA. The stretch at 338–384 forms a coiled coil; it reads KNLLEALEQRMERYHVAAAQAKAKGDQRKARMHERIVKQYQDAIRAH. The interval 428 to 482 is disordered; it reads ANHEEGSDEEEEETPKKNTPAASTAQPKASPSRAPPSGPAPAGKAASKGTSTRAQ. Ser434 bears the Phosphoserine mark. The segment covering 467–476 has biased composition (low complexity); sequence APAGKAASKG. The stretch at 475 to 508 forms a coiled coil; sequence KGTSTRAQQQLAFLEGRKKQLLQAALRAKQKNDV. The C2 domain maps to 628–762; it reads RFEQRTFSVI…ETACEVHEIL (135 aa).

Belongs to the CC2D1 family. As to expression, strongly expressed in several brain areas including frontal cortex, cortex, mesencephalon, hippocampus, midbrain and hypothalamus. Also expressed in testis and at low levels in pituitary, liver and kidney. In brain the highest levels are detected in hippocampal pyramidal cells and raphe nuclei.

Its subcellular location is the cytoplasm. The protein localises to the nucleus. It localises to the cytoskeleton. The protein resides in the microtubule organizing center. It is found in the centrosome. In terms of biological role, transcription factor that binds specifically to the DRE (dual repressor element) and represses 5-HT1A gene transcription though this element. Mediates HDAC-independent repression of HTR1A promoter. CAMK2G inhibits CC2D1a-induced repression of the HTR1A. May play a role in the altered regulation of 5-HT1A receptors associated with anxiety and major depression. Performs essential function in controlling functional maturation of synapses. The chain is Coiled-coil and C2 domain-containing protein 1A (Cc2d1a) from Rattus norvegicus (Rat).